A 157-amino-acid chain; its full sequence is Small ribosomal subunit protein uS7 (157 aa).

This sequence belongs to the universal ribosomal protein uS7 family. In terms of assembly, part of the 30S ribosomal subunit. Contacts proteins S9 and S11.

Its function is as follows. One of the primary rRNA binding proteins, it binds directly to 16S rRNA where it nucleates assembly of the head domain of the 30S subunit. Is located at the subunit interface close to the decoding center, probably blocks exit of the E-site tRNA. This is Small ribosomal subunit protein uS7 from Paracidovorax citrulli (strain AAC00-1) (Acidovorax citrulli).